We begin with the raw amino-acid sequence, 314 residues long: Torsin-2A (314 aa).

Residues 1–19 form the signal peptide; that stretch reads MAVRWWIIPMLLLVPGSSG. 86-93 is a binding site for ATP; the sequence is GWSGTGKT. Asn142 and Asn283 each carry an N-linked (GlcNAc...) asparagine glycan.

It belongs to the ClpA/ClpB family. Torsin subfamily. Homohexamer.

It is found in the endoplasmic reticulum lumen. The protein is Torsin-2A (tor2a) of Xenopus laevis (African clawed frog).